Here is a 235-residue protein sequence, read N- to C-terminus: 2-C-methyl-D-erythritol 4-phosphate cytidylyltransferase (235 aa).

This sequence belongs to the IspD/TarI cytidylyltransferase family. IspD subfamily.

It catalyses the reaction 2-C-methyl-D-erythritol 4-phosphate + CTP + H(+) = 4-CDP-2-C-methyl-D-erythritol + diphosphate. It participates in isoprenoid biosynthesis; isopentenyl diphosphate biosynthesis via DXP pathway; isopentenyl diphosphate from 1-deoxy-D-xylulose 5-phosphate: step 2/6. In terms of biological role, catalyzes the formation of 4-diphosphocytidyl-2-C-methyl-D-erythritol from CTP and 2-C-methyl-D-erythritol 4-phosphate (MEP). In Pseudomonas putida (strain ATCC 47054 / DSM 6125 / CFBP 8728 / NCIMB 11950 / KT2440), this protein is 2-C-methyl-D-erythritol 4-phosphate cytidylyltransferase.